The sequence spans 225 residues: Insulin-induced gene 2 protein (225 aa).

The Cytoplasmic segment spans residues 1-28 (MAEGETESPGPKKCGPYISSVTSQSVNL). Residues 29-51 (MIRGVVLFFIGVFLALVLNLLQI) form a helical membrane-spanning segment. Residues 52–70 (QRNVTLFPPDVIASIFSSA) lie on the Lumenal side of the membrane. A helical membrane pass occupies residues 71-88 (WWVPPCCGTASAVIGLLY). The Cytoplasmic portion of the chain corresponds to 89-103 (PCIDRHLGEPHKFKR). Residues 104–126 (EWSSVMRCVAVFVGINHASAKVD) form a helical membrane-spanning segment. Topologically, residues 127–129 (FDN) are lumenal. The chain crosses the membrane as a helical span at residues 130–148 (NIQLSLTLAALSIGLWWTF). Topologically, residues 149–153 (DRSRS) are cytoplasmic. At Ser151 the chain carries Phosphoserine. The chain crosses the membrane as a helical span at residues 154–175 (GFGLGVGIAFLATLVTQLLVYN). Over 176–189 (GVYQYTSPDFLYVR) the chain is Lumenal. Residues 190–207 (SWLPCIFFAGGITMGNIG) form a helical membrane-spanning segment. Over 208-225 (RQLAMYECKVIAEKSHQE) the chain is Cytoplasmic. At Cys215 the chain carries Cysteine sulfenic acid (-SOH); alternate. A Glycyl cysteine thioester (Cys-Gly) (interchain with G-Cter in ubiquitin); alternate cross-link involves residue Cys215. The KxHxx signature appears at 219 to 225 (AEKSHQE).

It belongs to the INSIG family. Interacts with SCAP; interaction is direct and only takes place in the presence of sterols; it prevents interaction between SCAP and the coat protein complex II (COPII). Associates with the SCAP-SREBP complex (composed of SCAP and SREBF1/SREBP1 or SREBF2/SREBP2); association is mediated via its interaction with SCAP and only takes place in the presence of sterols. Interacts with RNF139. Interacts with RNF145. Phosphorylation at Ser-151 by PCK1 reduces binding to oxysterol, disrupting the interaction between INSIG2 and SCAP, thereby promoting nuclear translocation of SREBP proteins (SREBF1/SREBP1 or SREBF2/SREBP2) and subsequent transcription of downstream lipogenesis-related genes. Post-translationally, polyubiquitinated by AMFR/gp78 at Cys-215 in some tissues such as adipose tissues, undifferentiated myoblasts and liver, leading to its degradation. In differentiated myotubes, Cys-215 oxidation prevents ubiquitination at the same site, resulting in protein stabilization. In terms of processing, oxidized at Cys-215 in differentiated myotubes, preventing ubiquitination at the same site, and resulting in protein stabilization.

It localises to the endoplasmic reticulum membrane. Oxysterol-binding protein that mediates feedback control of cholesterol synthesis by controlling both endoplasmic reticulum to Golgi transport of SCAP and degradation of HMGCR. Acts as a negative regulator of cholesterol biosynthesis by mediating the retention of the SCAP-SREBP complex in the endoplasmic reticulum, thereby blocking the processing of sterol regulatory element-binding proteins (SREBPs) SREBF1/SREBP1 and SREBF2/SREBP2. Binds oxysterol, including 22-hydroxycholesterol, 24-hydroxycholesterol, 25-hydroxycholesterol and 27-hydroxycholesterol, regulating interaction with SCAP and retention of the SCAP-SREBP complex in the endoplasmic reticulum. In presence of oxysterol, interacts with SCAP, retaining the SCAP-SREBP complex in the endoplasmic reticulum, thereby preventing SCAP from escorting SREBF1/SREBP1 and SREBF2/SREBP2 to the Golgi. Sterol deprivation or phosphorylation by PCK1 reduce oxysterol-binding, disrupting the interaction between INSIG2 and SCAP, thereby promoting Golgi transport of the SCAP-SREBP complex, followed by processing and nuclear translocation of SREBF1/SREBP1 and SREBF2/SREBP2. Also regulates cholesterol synthesis by regulating degradation of HMGCR: initiates the sterol-mediated ubiquitin-mediated endoplasmic reticulum-associated degradation (ERAD) of HMGCR via recruitment of the reductase to the ubiquitin ligase RNF139. The protein is Insulin-induced gene 2 protein of Papio anubis (Olive baboon).